The primary structure comprises 376 residues: Methionine import ATP-binding protein MetN 2 (376 aa).

The 240-residue stretch at valine 34–leucine 273 folds into the ABC transporter domain. Glycine 70 to serine 77 contributes to the ATP binding site.

It belongs to the ABC transporter superfamily. Methionine importer (TC 3.A.1.24) family. The complex is composed of two ATP-binding proteins (MetN), two transmembrane proteins (MetI) and a solute-binding protein (MetQ).

It is found in the cell inner membrane. It catalyses the reaction L-methionine(out) + ATP + H2O = L-methionine(in) + ADP + phosphate + H(+). The catalysed reaction is D-methionine(out) + ATP + H2O = D-methionine(in) + ADP + phosphate + H(+). Its function is as follows. Part of the ABC transporter complex MetNIQ involved in methionine import. Responsible for energy coupling to the transport system. The chain is Methionine import ATP-binding protein MetN 2 from Pseudomonas savastanoi pv. phaseolicola (strain 1448A / Race 6) (Pseudomonas syringae pv. phaseolicola (strain 1448A / Race 6)).